The following is a 337-amino-acid chain: Holliday junction branch migration complex subunit RuvB (337 aa).

The interval 1 to 181 is large ATPase domain (RuvB-L); it reads MQRLVEIERF…FGMNFRMQFY (181 aa). ATP contacts are provided by residues Leu20, Arg21, Gly62, Lys65, Thr66, Thr67, 128–130, Arg171, Tyr181, and Arg218; that span reads EDF. Residue Thr66 coordinates Mg(2+). The tract at residues 182 to 252 is small ATPAse domain (RuvB-S); sequence SPEELSKIIS…RAQYALDELG (71 aa). Residues 255 to 337 form a head domain (RuvB-H) region; the sequence is SYGFDEMDIK…MPALDDGGLF (83 aa). DNA is bound by residues Arg309 and Arg314.

This sequence belongs to the RuvB family. As to quaternary structure, homohexamer. Forms an RuvA(8)-RuvB(12)-Holliday junction (HJ) complex. HJ DNA is sandwiched between 2 RuvA tetramers; dsDNA enters through RuvA and exits via RuvB. An RuvB hexamer assembles on each DNA strand where it exits the tetramer. Each RuvB hexamer is contacted by two RuvA subunits (via domain III) on 2 adjacent RuvB subunits; this complex drives branch migration. In the full resolvosome a probable DNA-RuvA(4)-RuvB(12)-RuvC(2) complex forms which resolves the HJ.

Its subcellular location is the cytoplasm. The catalysed reaction is ATP + H2O = ADP + phosphate + H(+). Functionally, the RuvA-RuvB-RuvC complex processes Holliday junction (HJ) DNA during genetic recombination and DNA repair, while the RuvA-RuvB complex plays an important role in the rescue of blocked DNA replication forks via replication fork reversal (RFR). RuvA specifically binds to HJ cruciform DNA, conferring on it an open structure. The RuvB hexamer acts as an ATP-dependent pump, pulling dsDNA into and through the RuvAB complex. RuvB forms 2 homohexamers on either side of HJ DNA bound by 1 or 2 RuvA tetramers; 4 subunits per hexamer contact DNA at a time. Coordinated motions by a converter formed by DNA-disengaged RuvB subunits stimulates ATP hydrolysis and nucleotide exchange. Immobilization of the converter enables RuvB to convert the ATP-contained energy into a lever motion, pulling 2 nucleotides of DNA out of the RuvA tetramer per ATP hydrolyzed, thus driving DNA branch migration. The RuvB motors rotate together with the DNA substrate, which together with the progressing nucleotide cycle form the mechanistic basis for DNA recombination by continuous HJ branch migration. Branch migration allows RuvC to scan DNA until it finds its consensus sequence, where it cleaves and resolves cruciform DNA. The polypeptide is Holliday junction branch migration complex subunit RuvB (Sulfurimonas denitrificans (strain ATCC 33889 / DSM 1251) (Thiomicrospira denitrificans (strain ATCC 33889 / DSM 1251))).